A 215-amino-acid polypeptide reads, in one-letter code: Cytochrome b6 (215 aa).

A helical membrane pass occupies residues 32–52 (IFYCLGGITLTCFLVQVATGF). Cysteine 35 lines the heme c pocket. Residues histidine 86 and histidine 100 each contribute to the heme b site. 3 helical membrane passes run 90 to 110 (ASMM…TGGF), 116 to 136 (LTWV…VTGY), and 186 to 206 (LHTF…FLMI). The heme b site is built by histidine 187 and histidine 202.

Belongs to the cytochrome b family. PetB subfamily. As to quaternary structure, the 4 large subunits of the cytochrome b6-f complex are cytochrome b6, subunit IV (17 kDa polypeptide, PetD), cytochrome f and the Rieske protein, while the 4 small subunits are PetG, PetL, PetM and PetN. The complex functions as a dimer. It depends on heme b as a cofactor. Requires heme c as cofactor.

It is found in the plastid. Its subcellular location is the chloroplast thylakoid membrane. Its function is as follows. Component of the cytochrome b6-f complex, which mediates electron transfer between photosystem II (PSII) and photosystem I (PSI), cyclic electron flow around PSI, and state transitions. The sequence is that of Cytochrome b6 from Gossypium barbadense (Sea Island cotton).